The primary structure comprises 297 residues: N-acetylmuramic acid 6-phosphate etherase (297 aa).

One can recognise an SIS domain in the interval 56–219; the sequence is AIEAFNKGGR…STISMIGIGK (164 aa). The active-site Proton donor is glutamate 84. Residue glutamate 115 is part of the active site.

The protein belongs to the GCKR-like family. MurNAc-6-P etherase subfamily. As to quaternary structure, homodimer.

The catalysed reaction is N-acetyl-D-muramate 6-phosphate + H2O = N-acetyl-D-glucosamine 6-phosphate + (R)-lactate. It participates in amino-sugar metabolism; N-acetylmuramate degradation. Functionally, specifically catalyzes the cleavage of the D-lactyl ether substituent of MurNAc 6-phosphate, producing GlcNAc 6-phosphate and D-lactate. This chain is N-acetylmuramic acid 6-phosphate etherase, found in Lactococcus lactis subsp. cremoris (strain SK11).